We begin with the raw amino-acid sequence, 24 residues long: Brevinin-1Bd (24 aa).

The cysteines at positions 18 and 24 are disulfide-linked.

As to expression, expressed by the skin glands.

It localises to the secreted. Its function is as follows. Antibacterial activity against Gram-positive bacterium S.aureus and Gram-negative bacterium E.coli. Has activity against C.albicans. In Lithobates berlandieri (Rio Grande leopard frog), this protein is Brevinin-1Bd.